A 46-amino-acid chain; its full sequence is Major urinary protein (46 aa).

An N-linked (GlcNAc...) asparagine glycan is attached at asparagine 15.

The protein belongs to the calycin superfamily. Lipocalin family. In terms of tissue distribution, found in many tissues including liver, urine, preputial gland, clitoral gland, submandibular gland and salivary gland.

It is found in the secreted. Binds pheromones that are released from drying urine of males. These pheromones affect the sexual behavior of females. Acts as a shuttle for pheromonal communication between individuals of the same species. In Rattus rattus (Black rat), this protein is Major urinary protein.